We begin with the raw amino-acid sequence, 245 residues long: MIKLVLIRHGQSLWNLENRFTGWTDVDLSENGLSEAREAGAILKKNRYTFDVAYTSVLKRAIRTLWIVLHEMDLTWVPIHKSWKLNERHYGALQGLNKDETAQKYGEEQVHIWRRSVDVRPPALTEDDPRYEATDPRYKTLKKGEFPLTECLEDTEKRVLAYWHSEIAPILKNGNKVIISSHGNTIRSLVKYLDNLSSDGVVSLNIPTSIPLVYELDENLRPIRHYYLSMDGEVPEGEIPKHISF.

Substrate-binding positions include 8–15 (RHGQSLWN), 21–22 (TG), arginine 60, 87–90 (ERHY), lysine 98, 114–115 (RR), and 183–184 (GN). The active-site Tele-phosphohistidine intermediate is the histidine 9. Glutamate 87 functions as the Proton donor/acceptor in the catalytic mechanism.

It belongs to the phosphoglycerate mutase family. BPG-dependent PGAM subfamily.

The enzyme catalyses (2R)-2-phosphoglycerate = (2R)-3-phosphoglycerate. It participates in carbohydrate degradation; glycolysis; pyruvate from D-glyceraldehyde 3-phosphate: step 3/5. Catalyzes the interconversion of 2-phosphoglycerate and 3-phosphoglycerate. The chain is 2,3-bisphosphoglycerate-dependent phosphoglycerate mutase from Bacillus cereus (strain G9842).